A 765-amino-acid polypeptide reads, in one-letter code: 5-methyltetrahydropteroyltriglutamate--homocysteine methyltransferase (765 aa).

5-methyltetrahydropteroyltri-L-glutamate is bound by residues 16-19 (RELK) and K121. L-homocysteine is bound by residues 441–443 (IGS) and E494. Residues 441-443 (IGS) and E494 each bind L-methionine. 5-methyltetrahydropteroyltri-L-glutamate-binding positions include 525–526 (RC) and W571. D609 serves as a coordination point for L-homocysteine. D609 provides a ligand contact to L-methionine. Residue E615 participates in 5-methyltetrahydropteroyltri-L-glutamate binding. The Zn(2+) site is built by H651, C653, and E675. The active-site Proton donor is H704. C736 provides a ligand contact to Zn(2+).

Belongs to the vitamin-B12 independent methionine synthase family. Requires Zn(2+) as cofactor.

The catalysed reaction is 5-methyltetrahydropteroyltri-L-glutamate + L-homocysteine = tetrahydropteroyltri-L-glutamate + L-methionine. It functions in the pathway amino-acid biosynthesis; L-methionine biosynthesis via de novo pathway; L-methionine from L-homocysteine (MetE route): step 1/1. In terms of biological role, catalyzes the transfer of a methyl group from 5-methyltetrahydrofolate to homocysteine resulting in methionine formation. The polypeptide is 5-methyltetrahydropteroyltriglutamate--homocysteine methyltransferase (Saccharophagus degradans (strain 2-40 / ATCC 43961 / DSM 17024)).